We begin with the raw amino-acid sequence, 1302 residues long: Zinc finger protein 536 (1302 aa).

The segment at 1–26 (MEEASLCLGVSSTAPEAEPHLSGPVL) is disordered. 7 consecutive C2H2-type zinc fingers follow at residues 130–152 (YPCP…MRTH), 158–180 (FKCP…LRTH), 274–297 (FRCT…RILH), 300–323 (YKCT…EKAH), 345–367 (FRCE…MRKH), 373–395 (HCCQ…MKVH), and 631–653 (TECP…SRVH). A disordered region spans residues 650–736 (SRVHKRDRKS…IGEEAGRAGG (87 aa)). The span at 657-676 (RKSDEDALHVGVGLEERRGS) shows a compositional bias: basic and acidic residues. The segment covering 677–698 (GSDQESQSVSRSTTPGSSNVTE) has biased composition (polar residues). 2 C2H2-type zinc fingers span residues 753 to 775 (KDCP…LRIH) and 781 to 803 (YKCP…LERH). 4 disordered regions span residues 804–832 (HRER…SKAP), 855–897 (GPAS…SKSS), 935–988 (KDTK…APTL), and 1133–1261 (NKNT…GLEK). Phosphoserine occurs at positions 828 and 829. Positions 869–883 (GDHSGQATGMPSELS) are enriched in polar residues. Residues 935 to 973 (KDTKDKVPSDAHPMKAHTAEGGEEKASMKPSQRKSEKSQ) are compositionally biased toward basic and acidic residues. 2 stretches are compositionally biased toward acidic residues: residues 1161-1171 (DLSDIASSEDM) and 1179-1188 (NEDEELDTEP). The span at 1198–1212 (LSKDGSSEGGDSLLS) shows a compositional bias: low complexity.

The protein belongs to the krueppel C2H2-type zinc-finger protein family. In terms of tissue distribution, expressed predominantly in the brain, while a weak signal is also detected in the heart and testis. Expression is abundant in neuronal cells of the cerebral cortex, hippocampus and hypothalamic area (at protein level).

It localises to the nucleus. In terms of biological role, transcriptional repressor that negatively regulates neuron differentiation by repressing retinoic acid-induced gene transcription. Binds and interrupts RARA from binding to retinoic acid response elements (RARE) composed of tandem 5'-AGGTCA-3' sites known as DR1-DR5. Recognizes and binds 2 copies of the core DNA sequence 5'-CCCCCA-3'. The polypeptide is Zinc finger protein 536 (Znf536) (Mus musculus (Mouse)).